The following is a 65-amino-acid chain: Alpha-conotoxin Mr1.1 (65 aa).

The first 21 residues, 1–21 (MGMRMMFTVFLLVVLATTVVS), serve as a signal peptide directing secretion. The propeptide occupies 22 to 48 (FTSDRASDGRKAAAKDKASDLVALTVK). 2 disulfides stabilise this stretch: Cys-50-Cys-56 and Cys-51-Cys-64. Positions 52 to 54 (SHP) are ser-Xaa-Pro motif, crucial for potent interaction with nAChR. Position 64 is a cysteine amide (Cys-64).

This sequence belongs to the conotoxin A superfamily. Expressed by the venom duct.

It is found in the secreted. Its function is as follows. Alpha-conotoxins act on postsynaptic membranes, they bind to the nicotinic acetylcholine receptors (nAChR) and thus inhibit them. This toxin potently and reversibly inhibits alpha-9-alpha-10/CHRNA9-CHRNA10 (IC(50)=92 nM (human) and IC(50)=8.3 nM (rat)) and human alpha3-beta-2/CHRNA3-CHRNB2 nAChR (IC(50)=218.9 nM). Also moderately inhibits human alpha-3-beta-4/CHRNA3-CHRNB4 (60% inhibition at 1 uM), rat alpha-7/CHRNA7 (65% inhibition at 1 uM) and rat alpha-3-beta-2/CHRNA3-CHRNB2 nAChR (50-70% inhibition at 10 uM). In two rat pain models, this toxin shows analgesic effect. The chain is Alpha-conotoxin Mr1.1 from Conus marmoreus (Marble cone).